The sequence spans 206 residues: LexA repressor (206 aa).

Positions 28–48 form a DNA-binding region, H-T-H motif; it reads VREIGEAVGLASSSTVHGHLS. Residues Ser-129 and Lys-167 each act as for autocatalytic cleavage activity in the active site.

Belongs to the peptidase S24 family. As to quaternary structure, homodimer.

The catalysed reaction is Hydrolysis of Ala-|-Gly bond in repressor LexA.. Its function is as follows. Represses a number of genes involved in the response to DNA damage (SOS response), including recA and lexA. In the presence of single-stranded DNA, RecA interacts with LexA causing an autocatalytic cleavage which disrupts the DNA-binding part of LexA, leading to derepression of the SOS regulon and eventually DNA repair. This is LexA repressor from Staphylococcus epidermidis (strain ATCC 35984 / DSM 28319 / BCRC 17069 / CCUG 31568 / BM 3577 / RP62A).